The chain runs to 293 residues: SAGA-associated factor 29 (293 aa).

Residues 3–88 (LVSADSRIAE…KALDKIAEIK (86 aa)) adopt a coiled-coil conformation. In terms of domain architecture, SGF29 C-terminal spans 152–293 (GDYVARPGDK…VVACKEPKKK (142 aa)). Histone H3K4me3 N-terminus binding regions lie at residues 194 to 196 (DID) and 240 to 243 (QTTC). The tract at residues 264-266 (FED) is histone H3K4me3 binding. K288 bears the N6-acetyllysine mark.

This sequence belongs to the SGF29 family. Interacts with dimethylated and trimethylated 'Lys-4' of histone H3 (H3K4me2 and H3K4me3), with a preference for the trimethylated form (H3K4me3). Component of some SAGA-type complexes. Component of the ADA2A-containing complex (ATAC), composed of KAT14, KAT2A, TADA2L, TADA3L, ZZ3, MBIP, WDR5, YEATS2, CCDC101 and DR1. Interacts with (methylated) CGAS. Interacts with TADA3L, GCN5L2, SUPT3H and MYC.

The protein localises to the nucleus. Chromatin reader component of some histone acetyltransferase (HAT) SAGA-type complexes like the TFTC-HAT, ATAC or STAGA complexes. SGF29 specifically recognizes and binds methylated 'Lys-4' of histone H3 (H3K4me), with a preference for trimethylated form (H3K4me3). In the SAGA-type complexes, SGF29 is required to recruit complexes to H3K4me. Involved in the response to endoplasmic reticulum (ER) stress by recruiting the SAGA complex to H3K4me, thereby promoting histone H3 acetylation and cell survival. Also binds non-histone proteins that are methylated on Lys residues: specifically recognizes and binds CGAS monomethylated on 'Lys-506'. This chain is SAGA-associated factor 29, found in Homo sapiens (Human).